Reading from the N-terminus, the 341-residue chain is tRNA N6-adenosine threonylcarbamoyltransferase (341 aa).

Fe cation is bound by residues histidine 115 and histidine 119. Substrate contacts are provided by residues isoleucine 137–glycine 141, aspartate 170, glycine 183, aspartate 187, and asparagine 276. Residue aspartate 304 coordinates Fe cation.

Belongs to the KAE1 / TsaD family. Requires Fe(2+) as cofactor.

The protein localises to the cytoplasm. The enzyme catalyses L-threonylcarbamoyladenylate + adenosine(37) in tRNA = N(6)-L-threonylcarbamoyladenosine(37) in tRNA + AMP + H(+). In terms of biological role, required for the formation of a threonylcarbamoyl group on adenosine at position 37 (t(6)A37) in tRNAs that read codons beginning with adenine. Is involved in the transfer of the threonylcarbamoyl moiety of threonylcarbamoyl-AMP (TC-AMP) to the N6 group of A37, together with TsaE and TsaB. TsaD likely plays a direct catalytic role in this reaction. This is tRNA N6-adenosine threonylcarbamoyltransferase from Staphylococcus aureus (strain Mu3 / ATCC 700698).